The chain runs to 293 residues: MPWIQLKLNTTGANAEDLSDALMEAGAVSITFQDTHDTPVFEPLPGETRLWGDTDVIGLFDAETDMNDVVAILENHPLLGAGFAHKIEQLEDKDWEREWMDNFHPMRFGERLWICPSWRDVPDENAVNVMLDPGLAFGTGTHPTTSLCLQWLDSLDLTDKTVIDFGCGSGILAIAALKLGAAKAIGIDIDPQAIQASRDNAERNGVSDRLELYLPKDQPEEMKADVVVANILAGPLRELAPLISVLPVSGGLLGLSGILASQAESVCEAYADSFALDPVVEKEEWCRITGRKN.

4 residues coordinate S-adenosyl-L-methionine: Thr145, Gly166, Asp188, and Asn230.

This sequence belongs to the methyltransferase superfamily. PrmA family.

The protein localises to the cytoplasm. The enzyme catalyses L-lysyl-[protein] + 3 S-adenosyl-L-methionine = N(6),N(6),N(6)-trimethyl-L-lysyl-[protein] + 3 S-adenosyl-L-homocysteine + 3 H(+). Methylates ribosomal protein L11. The chain is Ribosomal protein L11 methyltransferase from Escherichia coli O8 (strain IAI1).